Consider the following 83-residue polypeptide: Small ribosomal subunit protein eS21 (83 aa).

Belongs to the eukaryotic ribosomal protein eS21 family. In terms of assembly, component of the 40S small ribosomal subunit.

The protein resides in the cytoplasm. It localises to the cytosol. The protein localises to the rough endoplasmic reticulum. The chain is Small ribosomal subunit protein eS21 (RpS21) from Agriotes lineatus (Lined click beetle).